The sequence spans 312 residues: Ribosomal protein L11 methyltransferase (312 aa).

The S-adenosyl-L-methionine site is built by T160, G181, D203, and N246.

Belongs to the methyltransferase superfamily. PrmA family.

The protein localises to the cytoplasm. It catalyses the reaction L-lysyl-[protein] + 3 S-adenosyl-L-methionine = N(6),N(6),N(6)-trimethyl-L-lysyl-[protein] + 3 S-adenosyl-L-homocysteine + 3 H(+). Functionally, methylates ribosomal protein L11. The sequence is that of Ribosomal protein L11 methyltransferase from Staphylococcus haemolyticus (strain JCSC1435).